Reading from the N-terminus, the 182-residue chain is RNA chaperone ProQ (182 aa).

The interval 125–160 (EQRKEQRKDFFKKKAREERNAKTMNKAVKKGSPKKD) is disordered.

The protein belongs to the ProQ family.

The protein localises to the cytoplasm. Functionally, RNA chaperone with significant RNA binding, RNA strand exchange and RNA duplexing activities. This is RNA chaperone ProQ from Haemophilus ducreyi (strain 35000HP / ATCC 700724).